A 322-amino-acid polypeptide reads, in one-letter code: tRNA dimethylallyltransferase (322 aa).

12-19 (GPTAAGKT) lines the ATP pocket. 14-19 (TAAGKT) contacts substrate. Interaction with substrate tRNA regions lie at residues 37 to 40 (DSAL) and 160 to 164 (QRLIR).

The protein belongs to the IPP transferase family. As to quaternary structure, monomer. Requires Mg(2+) as cofactor.

The catalysed reaction is adenosine(37) in tRNA + dimethylallyl diphosphate = N(6)-dimethylallyladenosine(37) in tRNA + diphosphate. Its function is as follows. Catalyzes the transfer of a dimethylallyl group onto the adenine at position 37 in tRNAs that read codons beginning with uridine, leading to the formation of N6-(dimethylallyl)adenosine (i(6)A). In Pseudomonas putida (Arthrobacter siderocapsulatus), this protein is tRNA dimethylallyltransferase.